We begin with the raw amino-acid sequence, 236 residues long: NAD(P)H-hydrate epimerase (236 aa).

The region spanning 11-217 is the YjeF N-terminal domain; it reads AAALDRELMS…SIAKKYDFDV (207 aa). Residue 61–65 coordinates (6S)-NADPHX; the sequence is NNGGD. 2 residues coordinate K(+): asparagine 62 and aspartate 123. (6S)-NADPHX-binding positions include 127-133 and aspartate 156; that span reads GFSFSGE. Serine 159 contacts K(+).

Belongs to the NnrE/AIBP family. K(+) serves as cofactor.

It localises to the cytoplasm. The protein resides in the mitochondrion. The catalysed reaction is (6R)-NADHX = (6S)-NADHX. The enzyme catalyses (6R)-NADPHX = (6S)-NADPHX. Functionally, catalyzes the epimerization of the S- and R-forms of NAD(P)HX, a damaged form of NAD(P)H that is a result of enzymatic or heat-dependent hydration. This is a prerequisite for the S-specific NAD(P)H-hydrate dehydratase to allow the repair of both epimers of NAD(P)HX. The protein is NAD(P)H-hydrate epimerase of Neurospora crassa (strain ATCC 24698 / 74-OR23-1A / CBS 708.71 / DSM 1257 / FGSC 987).